Reading from the N-terminus, the 45-residue chain is Putative potassium channel blocker (45 aa).

In terms of tissue distribution, expressed by the venom gland.

The protein localises to the secreted. In terms of biological role, inhibits potassium channels. The sequence is that of Putative potassium channel blocker from Hottentotta tamulus (Eastern Indian scorpion).